The following is a 538-amino-acid chain: Phosphoenolpyruvate carboxykinase (ATP) (538 aa).

3 residues coordinate substrate: Arg61, Tyr195, and Lys201. ATP is bound by residues Lys201, His220, and 236-244 (GLSGTGKTT). Mn(2+) is bound by residues Lys201 and His220. Residue Asp257 participates in Mn(2+) binding. ATP-binding residues include Glu285, Arg323, and Thr449. Arg323 is a binding site for substrate.

Belongs to the phosphoenolpyruvate carboxykinase (ATP) family. Mn(2+) is required as a cofactor.

The protein resides in the cytoplasm. The enzyme catalyses oxaloacetate + ATP = phosphoenolpyruvate + ADP + CO2. The protein operates within carbohydrate biosynthesis; gluconeogenesis. Its function is as follows. Involved in the gluconeogenesis. Catalyzes the conversion of oxaloacetate (OAA) to phosphoenolpyruvate (PEP) through direct phosphoryl transfer between the nucleoside triphosphate and OAA. In Afipia carboxidovorans (strain ATCC 49405 / DSM 1227 / KCTC 32145 / OM5) (Oligotropha carboxidovorans), this protein is Phosphoenolpyruvate carboxykinase (ATP).